Consider the following 162-residue polypeptide: UPF0460 protein y4xD (162 aa).

The protein belongs to the UPF0460 family.

This Sinorhizobium fredii (strain NBRC 101917 / NGR234) protein is UPF0460 protein y4xD.